Reading from the N-terminus, the 151-residue chain is Ribosome maturation factor RimP (151 aa).

The protein belongs to the RimP family.

Its subcellular location is the cytoplasm. Its function is as follows. Required for maturation of 30S ribosomal subunits. This is Ribosome maturation factor RimP from Colwellia psychrerythraea (strain 34H / ATCC BAA-681) (Vibrio psychroerythus).